A 460-amino-acid chain; its full sequence is Probable fibrosin-1 (460 aa).

A Glycyl lysine isopeptide (Lys-Gly) (interchain with G-Cter in SUMO2) cross-link involves residue Lys-8. Disordered regions lie at residues 40-79 (SLQG…FRPP), 205-311 (FAQK…KEEA), and 406-460 (YSRL…RADR). A compositionally biased stretch (pro residues) spans 212–223 (GAPPAFASPPDP). 2 positions are modified to asymmetric dimethylarginine: Arg-229 and Arg-239. Residues 248–272 (GSDKERPVERREPSITKEEKDRDLP) show a composition bias toward basic and acidic residues. Ser-281 bears the Phosphoserine mark. The span at 288–311 (RAGEEGPRPTKESVRVKEERKEEA) shows a compositional bias: basic and acidic residues. Residues 436 to 453 (APPPLVPAPRPSSPPRGP) show a composition bias toward pro residues.

This is Probable fibrosin-1 (FBRS) from Homo sapiens (Human).